A 264-amino-acid chain; its full sequence is S-adenosylmethionine decarboxylase proenzyme (264 aa).

Catalysis depends on Ser112, which acts as the Schiff-base intermediate with substrate; via pyruvic acid. At Ser112 the chain carries Pyruvic acid (Ser); by autocatalysis. His117 acts as the Proton acceptor; for processing activity in catalysis. Residue Cys140 is the Proton donor; for catalytic activity of the active site.

This sequence belongs to the prokaryotic AdoMetDC family. Type 2 subfamily. In terms of assembly, heterooctamer of four alpha and four beta chains arranged as a tetramer of alpha/beta heterodimers. Pyruvate serves as cofactor. Post-translationally, is synthesized initially as an inactive proenzyme. Formation of the active enzyme involves a self-maturation process in which the active site pyruvoyl group is generated from an internal serine residue via an autocatalytic post-translational modification. Two non-identical subunits are generated from the proenzyme in this reaction, and the pyruvate is formed at the N-terminus of the alpha chain, which is derived from the carboxyl end of the proenzyme. The post-translation cleavage follows an unusual pathway, termed non-hydrolytic serinolysis, in which the side chain hydroxyl group of the serine supplies its oxygen atom to form the C-terminus of the beta chain, while the remainder of the serine residue undergoes an oxidative deamination to produce ammonia and the pyruvoyl group blocking the N-terminus of the alpha chain.

It catalyses the reaction S-adenosyl-L-methionine + H(+) = S-adenosyl 3-(methylsulfanyl)propylamine + CO2. The protein operates within amine and polyamine biosynthesis; S-adenosylmethioninamine biosynthesis; S-adenosylmethioninamine from S-adenosyl-L-methionine: step 1/1. Catalyzes the decarboxylation of S-adenosylmethionine to S-adenosylmethioninamine (dcAdoMet), the propylamine donor required for the synthesis of the polyamines spermine and spermidine from the diamine putrescine. The polypeptide is S-adenosylmethionine decarboxylase proenzyme (Photorhabdus laumondii subsp. laumondii (strain DSM 15139 / CIP 105565 / TT01) (Photorhabdus luminescens subsp. laumondii)).